A 147-amino-acid polypeptide reads, in one-letter code: Large ribosomal subunit protein bL9 (147 aa).

It belongs to the bacterial ribosomal protein bL9 family.

In terms of biological role, binds to the 23S rRNA. In Thermodesulfovibrio yellowstonii (strain ATCC 51303 / DSM 11347 / YP87), this protein is Large ribosomal subunit protein bL9.